We begin with the raw amino-acid sequence, 303 residues long: N-acetyl-D-glucosamine kinase (303 aa).

ATP is bound by residues 4-11 and 133-140; these read GFDVGGTK and GFGGGLIF. Residues His157, Cys177, Cys179, and Cys184 each contribute to the Zn(2+) site.

Belongs to the ROK (NagC/XylR) family. NagK subfamily.

The catalysed reaction is N-acetyl-D-glucosamine + ATP = N-acetyl-D-glucosamine 6-phosphate + ADP + H(+). It participates in cell wall biogenesis; peptidoglycan recycling. Its function is as follows. Catalyzes the phosphorylation of N-acetyl-D-glucosamine (GlcNAc) derived from cell-wall degradation, yielding GlcNAc-6-P. The polypeptide is N-acetyl-D-glucosamine kinase (Aliivibrio fischeri (strain ATCC 700601 / ES114) (Vibrio fischeri)).